The chain runs to 76 residues: Lividin-2 (76 aa).

The signal sequence occupies residues Met1–Cys22. Positions Gln23–Val41 are excised as a propeptide. Residues Cys70 and Cys76 are joined by a disulfide bond.

As to expression, expressed by the skin glands.

The protein localises to the secreted. In terms of biological role, antimicrobial peptide. The sequence is that of Lividin-2 from Odorrana livida (Green mountain frog).